The chain runs to 400 residues: Casein kinase I homolog hhp2 (400 aa).

A Protein kinase domain is found at 12-278; that stretch reads YRIGRKIGSG…YLRKLFRDLL (267 aa). ATP contacts are provided by residues 18-26 and Lys41; that span reads IGSGSFGQI. The Proton acceptor role is filled by Asp131. The interval 330–352 is disordered; the sequence is PNYSSIPLPAERNPKTPQSFSTN.

It belongs to the protein kinase superfamily. CK1 Ser/Thr protein kinase family. Casein kinase I subfamily.

The protein localises to the nucleus. The enzyme catalyses L-seryl-[protein] + ATP = O-phospho-L-seryl-[protein] + ADP + H(+). It carries out the reaction L-threonyl-[protein] + ATP = O-phospho-L-threonyl-[protein] + ADP + H(+). Functionally, involved in DNA repair. May regulate the activity of protein(s) involved in double strand break repair caused by gamma rays. This Schizosaccharomyces pombe (strain 972 / ATCC 24843) (Fission yeast) protein is Casein kinase I homolog hhp2 (hhp2).